The chain runs to 287 residues: S-methyl-5'-thioadenosine phosphorylase (287 aa).

Residues T13 and 55-56 (RH) each bind phosphate. Residue M186 coordinates substrate. T187 provides a ligand contact to phosphate. 210-212 (DYD) is a substrate binding site.

Belongs to the PNP/MTAP phosphorylase family. MTAP subfamily. As to quaternary structure, homohexamer. Dimer of a homotrimer.

The enzyme catalyses S-methyl-5'-thioadenosine + phosphate = 5-(methylsulfanyl)-alpha-D-ribose 1-phosphate + adenine. The protein operates within amino-acid biosynthesis; L-methionine biosynthesis via salvage pathway; S-methyl-5-thio-alpha-D-ribose 1-phosphate from S-methyl-5'-thioadenosine (phosphorylase route): step 1/1. Catalyzes the reversible phosphorylation of S-methyl-5'-thioadenosine (MTA) to adenine and 5-methylthioribose-1-phosphate. Involved in the breakdown of MTA, a major by-product of polyamine biosynthesis. Responsible for the first step in the methionine salvage pathway after MTA has been generated from S-adenosylmethionine. Has broad substrate specificity with 6-aminopurine nucleosides as preferred substrates. In Leptospira interrogans serogroup Icterohaemorrhagiae serovar Lai (strain 56601), this protein is S-methyl-5'-thioadenosine phosphorylase.